Here is a 503-residue protein sequence, read N- to C-terminus: MEYMAESTDRSPGHILCCECGVPISPNPANICVACLRSKVDISQGIPKQVSISFCKQCQRYFQPPGTWIQCALESRELLALCLKKIKAPLSKVRLVDAGFVWTEPHSKRLKVKLTIQKEVMNGAILQQVFVVDYVVQSQMCGDCHRVEAKDFWKAVIQVRQKTLHKKTFYYLEQLILKYGMHQNTLRIKEIHDGLDFYYSSKQHAQKMVEFLQCTVPCRYKASQRLISQDIHSNTYNYKSTFSVEIVPICKDNVVCLSPKLAQSLGNMNQICVCIRVTSAIHLIDPNTLQVADIDGSTFWSHPFNSLCHPKQLEEFIVMECSIVQDIKRAAGAGMISKKHTLGEVWVQKTSEMNTDKQYFCRTHLGHLLNPGDLVLGFDLANCNLNDEHVNKMNSDRVPDVVLIKKSYDRTKRQRRRNWKLKELARERENMDTDDERQYQDFLEDLEEDEAIRKNVNIYRDSAIPVESDTDDEGAPRISLAEMLEDLHISQDATGEEGASMLT.

Met-1 is modified (N-acetylmethionine). Ser-258 bears the Phosphoserine mark. The short motif at 405 to 422 (KKSYDRTKRQRRRNWKLK) is the Nuclear and nucleolar localization signal element. The necessary for the nuclear export of the 60S ribosomal subunit stretch occupies residues 425 to 503 (ARERENMDTD…TGEEGASMLT (79 aa)). Thr-433 bears the Phosphothreonine mark. Position 468 is a phosphoserine (Ser-468). Phosphothreonine is present on Thr-470. Residues 480–489 (LAEMLEDLHI) carry the Nuclear export signal motif.

This sequence belongs to the NMD3 family. In terms of assembly, found in a 60S ribosomal subunit export complex with RAN and XPO1. Interacts with XPO1. Associates with pre-60S ribosomal particles.

Its subcellular location is the cytoplasm. The protein resides in the nucleus. In terms of biological role, acts as an adapter for the XPO1/CRM1-mediated export of the 60S ribosomal subunit. This chain is 60S ribosomal export protein NMD3 (NMD3), found in Homo sapiens (Human).